Consider the following 621-residue polypeptide: Kelch-like protein 6 (621 aa).

The BTB domain occupies 72–139; sequence TDVILCVDIQ…TYTSKALITK (68 aa). One can recognise a BACK domain in the interval 174-276; it reads CVGILRLADT…DPWYFVETVE (103 aa). Kelch repeat units lie at residues 320–367, 378–421, 422–468, 470–516, 517–558, and 560–606; these read VFMI…NKKW, EVYI…VLGG, KVYV…SHKK, LYVI…SFRD, RIYV…PCNN, and LYIT…TIRK.

In terms of tissue distribution, found in germinal center B-cells.

Involved in B-lymphocyte antigen receptor signaling and germinal center formation. The chain is Kelch-like protein 6 (KLHL6) from Homo sapiens (Human).